The sequence spans 335 residues: Glyceraldehyde-3-phosphate dehydrogenase (335 aa).

NAD(+) contacts are provided by residues 13–14 (TI) and Gly111. Residue 140-142 (SCN) participates in D-glyceraldehyde 3-phosphate binding. The active-site Nucleophile is Cys141. Arg169 contacts NAD(+). 195-196 (HG) is a D-glyceraldehyde 3-phosphate binding site. Gln300 serves as a coordination point for NAD(+).

It belongs to the glyceraldehyde-3-phosphate dehydrogenase family. As to quaternary structure, homotetramer.

The protein localises to the cytoplasm. The enzyme catalyses D-glyceraldehyde 3-phosphate + phosphate + NADP(+) = (2R)-3-phospho-glyceroyl phosphate + NADPH + H(+). It carries out the reaction D-glyceraldehyde 3-phosphate + phosphate + NAD(+) = (2R)-3-phospho-glyceroyl phosphate + NADH + H(+). It functions in the pathway carbohydrate degradation; glycolysis; pyruvate from D-glyceraldehyde 3-phosphate: step 1/5. This is Glyceraldehyde-3-phosphate dehydrogenase from Methanococcoides burtonii (strain DSM 6242 / NBRC 107633 / OCM 468 / ACE-M).